A 169-amino-acid chain; its full sequence is S-ribosylhomocysteine lyase (169 aa).

Fe cation contacts are provided by His54, His58, and Cys128.

It belongs to the LuxS family. As to quaternary structure, homodimer. Requires Fe cation as cofactor.

The enzyme catalyses S-(5-deoxy-D-ribos-5-yl)-L-homocysteine = (S)-4,5-dihydroxypentane-2,3-dione + L-homocysteine. In terms of biological role, involved in the synthesis of autoinducer 2 (AI-2) which is secreted by bacteria and is used to communicate both the cell density and the metabolic potential of the environment. The regulation of gene expression in response to changes in cell density is called quorum sensing. Catalyzes the transformation of S-ribosylhomocysteine (RHC) to homocysteine (HC) and 4,5-dihydroxy-2,3-pentadione (DPD). The sequence is that of S-ribosylhomocysteine lyase from Shewanella frigidimarina (strain NCIMB 400).